The following is a 282-amino-acid chain: Orotidine 5'-phosphate decarboxylase (282 aa).

The active-site Proton donor is the lysine 95.

The protein belongs to the OMP decarboxylase family. Type 2 subfamily.

The enzyme catalyses orotidine 5'-phosphate + H(+) = UMP + CO2. The protein operates within pyrimidine metabolism; UMP biosynthesis via de novo pathway; UMP from orotate: step 2/2. This chain is Orotidine 5'-phosphate decarboxylase (pyrF), found in Mycobacterium leprae (strain TN).